A 571-amino-acid chain; its full sequence is Vesicle-associated protein 1-4 (571 aa).

The MSP 1 domain maps to 1-126; that stretch reads MSTDELLTFD…EETIFKIIYV (126 aa). The disordered stretch occupies residues 132 to 154; the sequence is QSPVQEGLEDGSSPSASVSDKGN. Residues 143-153 show a composition bias toward polar residues; it reads SSPSASVSDKG. Residues 176 to 296 enclose the MSP 2 domain; it reads LLIIDPVDVQ…EETRLKVMYV (121 aa). The tract at residues 297 to 322 is disordered; sequence TPPQPPSPVQEGTEEGSSPRASVSDN. A compositionally biased stretch (polar residues) spans 311–322; that stretch reads EGSSPRASVSDN. A TIR domain is found at 356-493; it reads PQYQVFINFR…KWKEALSSVF (138 aa). E430 is an active-site residue.

Belongs to the VAMP-associated protein (VAP) (TC 9.B.17) family.

The enzyme catalyses NAD(+) + H2O = ADP-D-ribose + nicotinamide + H(+). In terms of biological role, may play a role in vesicle trafficking. In Arabidopsis thaliana (Mouse-ear cress), this protein is Vesicle-associated protein 1-4 (PVA14).